The following is a 200-amino-acid chain: SKP1-like protein 19 (200 aa).

A compositionally biased stretch (basic and acidic residues) spans 67 to 92 (DDVVETHESSTKGDKTVEEAKKKPDD). The interval 67–109 (DDVVETHESSTKGDKTVEEAKKKPDDVAVPESTEGDDEAEDKK) is disordered. Residues 132–190 (ILAANYLNVQGLFDLCSKTIADYIKDMTPEEVRELFNIENDFTPEEEEAIRNENAWTFE) form an interaction with the F-box domain of F-box proteins region.

Belongs to the SKP1 family. In terms of assembly, part of a SCF (SKP1-cullin-F-box) protein ligase complex. Interacts with CPR1/CPR30. Expressed in leaves and flowers.

The protein localises to the nucleus. It functions in the pathway protein modification; protein ubiquitination. Involved in ubiquitination and subsequent proteasomal degradation of target proteins. Together with CUL1, RBX1 and a F-box protein, it forms a SCF E3 ubiquitin ligase complex. The functional specificity of this complex depends on the type of F-box protein. In the SCF complex, it serves as an adapter that links the F-box protein to CUL1. This chain is SKP1-like protein 19 (ASK19), found in Arabidopsis thaliana (Mouse-ear cress).